A 269-amino-acid polypeptide reads, in one-letter code: 3-deoxy-manno-octulosonate cytidylyltransferase (269 aa).

Belongs to the KdsB family.

It localises to the cytoplasm. It catalyses the reaction 3-deoxy-alpha-D-manno-oct-2-ulosonate + CTP = CMP-3-deoxy-beta-D-manno-octulosonate + diphosphate. Its pathway is nucleotide-sugar biosynthesis; CMP-3-deoxy-D-manno-octulosonate biosynthesis; CMP-3-deoxy-D-manno-octulosonate from 3-deoxy-D-manno-octulosonate and CTP: step 1/1. It functions in the pathway bacterial outer membrane biogenesis; lipopolysaccharide biosynthesis. Functionally, activates KDO (a required 8-carbon sugar) for incorporation into bacterial lipopolysaccharide in Gram-negative bacteria. This chain is 3-deoxy-manno-octulosonate cytidylyltransferase, found in Cupriavidus necator (strain ATCC 17699 / DSM 428 / KCTC 22496 / NCIMB 10442 / H16 / Stanier 337) (Ralstonia eutropha).